The sequence spans 345 residues: Serine/threonine-protein kinase US3 homolog (345 aa).

Positions 49 to 334 constitute a Protein kinase domain; sequence FSVLETFTPG…KALLDFAAFY (286 aa). ATP contacts are provided by residues 55–63 and K78; that span reads FTPGAEGFT. D162 serves as the catalytic Proton acceptor.

The protein belongs to the protein kinase superfamily. Ser/Thr protein kinase family. Phosphorylated by UL13 homolog; this phosphorylation regulates subsequent phosphorylation of UL31 and UL34 homologs by US3. Autophosphorylated.

It localises to the host cytoplasm. Its subcellular location is the host nucleus. It catalyses the reaction L-seryl-[protein] + ATP = O-phospho-L-seryl-[protein] + ADP + H(+). The catalysed reaction is L-threonyl-[protein] + ATP = O-phospho-L-threonyl-[protein] + ADP + H(+). Multifunctional serine/threonine kinase that plays a role in several processes including egress of virus particles from the nucleus, modulation of the actin cytoskeleton and inhibition of apoptosis. Phosphorylates UL31 and UL34 homologs, two critical regulators of capsid budding from nucleus to endoplasmic reticulum, thereby facilitating virion egress. Modulates and redistributes host components of the nuclear envelope, including LMNA, emerin/EMD and the nuclear matrix protein MATR3. Phosphorylates envelope glycoprotein B (gB), probably to direct it to the cell surface. Promotes virus intracellular spread by restructuring host cell cytoskeleton. Blocks host apoptosis to extend cell survival and allow efficient viral replication. Promotes viral gene expression by phosphorylating host HDAC2 to reduce viral genome silencing. The protein is Serine/threonine-protein kinase US3 homolog (US2) of Chlorocebus aethiops (Green monkey).